The chain runs to 276 residues: Undecaprenyl-diphosphatase (276 aa).

A run of 5 helical transmembrane segments spans residues 85-105 (MNVVIATVPAVALALLFEKTI), 108-128 (VLFAPVPVAVALVVGGAAILW), 187-207 (VATEFSFFLAIPVIFGATLYE), 217-237 (VDSVGLFAIGLVAAFVSAFAC), and 253-273 (FAWYRIAFGLFVLLVGYSGWI).

It belongs to the UppP family.

Its subcellular location is the cell inner membrane. The enzyme catalyses di-trans,octa-cis-undecaprenyl diphosphate + H2O = di-trans,octa-cis-undecaprenyl phosphate + phosphate + H(+). In terms of biological role, catalyzes the dephosphorylation of undecaprenyl diphosphate (UPP). Confers resistance to bacitracin. The protein is Undecaprenyl-diphosphatase of Burkholderia mallei (strain NCTC 10247).